We begin with the raw amino-acid sequence, 169 residues long: NADH dehydrogenase [ubiquinone] 1 alpha subcomplex assembly factor 2 (169 aa).

Residues 116-169 are disordered; that stretch reads TSEELLPPPVQTQIKGHASAPYFGKEEPSVAPSSTGKTFQPGSWMPRDGKSHNQ. Position 134 is a phosphoserine (S134). Residues 146–156 show a composition bias toward polar residues; the sequence is APSSTGKTFQP.

This sequence belongs to the complex I NDUFA12 subunit family. As to quaternary structure, interacts with ARMC9. As to expression, highly expressed in ESCC cells. Also expressed in heart, skeletal muscle, liver, and in fibroblasts.

It is found in the mitochondrion. Acts as a molecular chaperone for mitochondrial complex I assembly. Complex I functions in the transfer of electrons from NADH to the respiratory chain. The immediate electron acceptor for the enzyme is believed to be ubiquinone. Is involved in the initial steps of cilia formation, including removal of CP110 from the mother centrioles, docking of membrane vesicles to the mother centrioles, and establishment of the transition zone. This Homo sapiens (Human) protein is NADH dehydrogenase [ubiquinone] 1 alpha subcomplex assembly factor 2 (NDUFAF2).